Reading from the N-terminus, the 359-residue chain is Histidinol-phosphate aminotransferase (359 aa).

Residue lysine 217 is modified to N6-(pyridoxal phosphate)lysine.

The protein belongs to the class-II pyridoxal-phosphate-dependent aminotransferase family. Histidinol-phosphate aminotransferase subfamily. In terms of assembly, homodimer. It depends on pyridoxal 5'-phosphate as a cofactor.

The enzyme catalyses L-histidinol phosphate + 2-oxoglutarate = 3-(imidazol-4-yl)-2-oxopropyl phosphate + L-glutamate. It participates in amino-acid biosynthesis; L-histidine biosynthesis; L-histidine from 5-phospho-alpha-D-ribose 1-diphosphate: step 7/9. In Salmonella typhimurium (strain LT2 / SGSC1412 / ATCC 700720), this protein is Histidinol-phosphate aminotransferase (hisC).